A 596-amino-acid chain; its full sequence is Nodulation outer protein X (596 aa).

Its subcellular location is the secreted. This is Nodulation outer protein X (nopX) from Sinorhizobium fredii (strain NBRC 101917 / NGR234).